The following is a 517-amino-acid chain: Glycerol kinase 5 (517 aa).

ATP contacts are provided by Ser-23 and Thr-24. Glycerol-binding residues include Arg-93, Asp-270, and Gln-271. Positions 292, 335, and 432 each coordinate ATP.

It belongs to the FGGY kinase family.

Its subcellular location is the cytoplasm. The catalysed reaction is glycerol + ATP = sn-glycerol 3-phosphate + ADP + H(+). It participates in polyol metabolism; glycerol degradation via glycerol kinase pathway; sn-glycerol 3-phosphate from glycerol: step 1/1. Functionally, skin-specific kinase that plays a key role in glycerol metabolism, catalyzing its phosphorylation to produce sn-glycerol 3-phosphate. Involved in skin-specific regulation of sterol regulatory element-binding protein (SREBP) processing and lipid biosynthesis. This Gallus gallus (Chicken) protein is Glycerol kinase 5 (GK5).